The sequence spans 484 residues: ATP synthase subunit beta (484 aa).

168–175 (GGAGVGKT) serves as a coordination point for ATP.

The protein belongs to the ATPase alpha/beta chains family. As to quaternary structure, F-type ATPases have 2 components, CF(1) - the catalytic core - and CF(0) - the membrane proton channel. CF(1) has five subunits: alpha(3), beta(3), gamma(1), delta(1), epsilon(1). CF(0) has three main subunits: a(1), b(2) and c(9-12). The alpha and beta chains form an alternating ring which encloses part of the gamma chain. CF(1) is attached to CF(0) by a central stalk formed by the gamma and epsilon chains, while a peripheral stalk is formed by the delta and b chains.

Its subcellular location is the cell membrane. The catalysed reaction is ATP + H2O + 4 H(+)(in) = ADP + phosphate + 5 H(+)(out). In terms of biological role, produces ATP from ADP in the presence of a proton gradient across the membrane. The catalytic sites are hosted primarily by the beta subunits. The chain is ATP synthase subunit beta from Renibacterium salmoninarum (strain ATCC 33209 / DSM 20767 / JCM 11484 / NBRC 15589 / NCIMB 2235).